We begin with the raw amino-acid sequence, 409 residues long: MKGILHGLRVVEGSAFVAAPLGGMTLAQLGADVIRFDPIGGGLDYKRWPVTLDGKHSLFWAGLNKGKRSIAIDIRHPRGQELLTQLICAPGEHAGLFITNFPARGWLSYDELKRHRADLIMVNLVGRRDGGSEVDYTVNPQLGLPFMTGPVTTPDVVNHVLPAWDIVTGQMIALGLLAAERHRRLTGEGQLVKIALKDVGLAMIGHLGMIAEVMINDTDRPRQGNYLYGAFGRDFETLDGKRVMVVGLTDLQWKALGKATGLTDAFNALGARLGLNMDEEGDRFRARHEIAALLEPWFHARTLAEVRRIFEQHRVTWAPYRTVREAIAQDPDCSTDNPMFAMVEQPGIGSYLMPGSPLDFTAVPRLPVQPAPRLGEHTDEILLEVLGLSEAEVGRLHDEGIVAGPDRAA.

Catalysis depends on Asp165, which acts as the Nucleophile.

This sequence belongs to the CoA-transferase III family. Mesaconyl-CoA isomerase subfamily. As to quaternary structure, homodimer.

It catalyses the reaction 2-methylfumaryl-CoA = 3-methylfumaryl-CoA. Partially inhibited by hydroxylamine. Its function is as follows. Involved in the glyoxylate assimilation cycle used to regenerate acetyl-CoA and produce pyruvate as universal precursor for biosynthesis. This reaction involves an intramolecular CoA transferase that catalyzes the reversible transfer of the CoA moiety from the C1-carboxyl group of mesaconyl-CoA to the C4-carboxyl group. It does not require free mesaconate as CoA acceptor. The chain is 2-methylfumaryl-CoA isomerase (mct) from Chloroflexus aurantiacus (strain ATCC 29366 / DSM 635 / J-10-fl).